A 442-amino-acid polypeptide reads, in one-letter code: Elongation factor 1-alpha (442 aa).

The 224-residue stretch at 6 to 229 (KPHMNLIVIG…ALDNLKPPSV (224 aa)) folds into the tr-type G domain. Positions 15-22 (GHVDHGKS) are G1. 15-22 (GHVDHGKS) provides a ligand contact to GTP. Ser22 provides a ligand contact to Mg(2+). The G2 stretch occupies residues 71–75 (GVTID). The segment at 92-95 (DAPG) is G3. Residues 92–96 (DAPGH) and 154–157 (NKMD) contribute to the GTP site. The segment at 154-157 (NKMD) is G4. The segment at 195–197 (SAW) is G5.

This sequence belongs to the TRAFAC class translation factor GTPase superfamily. Classic translation factor GTPase family. EF-Tu/EF-1A subfamily.

It localises to the cytoplasm. It catalyses the reaction GTP + H2O = GDP + phosphate + H(+). Its function is as follows. GTP hydrolase that promotes the GTP-dependent binding of aminoacyl-tRNA to the A-site of ribosomes during protein biosynthesis. The sequence is that of Elongation factor 1-alpha from Ignicoccus hospitalis (strain KIN4/I / DSM 18386 / JCM 14125).